The following is a 429-amino-acid chain: Serine hydroxymethyltransferase (429 aa).

Residues leucine 127 and 131-133 (GHL) each bind (6S)-5,6,7,8-tetrahydrofolate. Lysine 236 carries the post-translational modification N6-(pyridoxal phosphate)lysine. Residue glutamate 252 coordinates (6S)-5,6,7,8-tetrahydrofolate.

It belongs to the SHMT family. Homodimer. Requires pyridoxal 5'-phosphate as cofactor.

It is found in the cytoplasm. It carries out the reaction (6R)-5,10-methylene-5,6,7,8-tetrahydrofolate + glycine + H2O = (6S)-5,6,7,8-tetrahydrofolate + L-serine. Its pathway is one-carbon metabolism; tetrahydrofolate interconversion. The protein operates within amino-acid biosynthesis; glycine biosynthesis; glycine from L-serine: step 1/1. Catalyzes the reversible interconversion of serine and glycine with tetrahydrofolate (THF) serving as the one-carbon carrier. This reaction serves as the major source of one-carbon groups required for the biosynthesis of purines, thymidylate, methionine, and other important biomolecules. Also exhibits THF-independent aldolase activity toward beta-hydroxyamino acids, producing glycine and aldehydes, via a retro-aldol mechanism. The protein is Serine hydroxymethyltransferase of Rhodospirillum centenum (strain ATCC 51521 / SW).